The sequence spans 507 residues: ATP synthase subunit alpha (507 aa).

171-178 (GDRQTGKT) contributes to the ATP binding site.

It belongs to the ATPase alpha/beta chains family. F-type ATPases have 2 components, CF(1) - the catalytic core - and CF(0) - the membrane proton channel. CF(1) has five subunits: alpha(3), beta(3), gamma(1), delta(1), epsilon(1). CF(0) has three main subunits: a(1), b(2) and c(9-12). The alpha and beta chains form an alternating ring which encloses part of the gamma chain. CF(1) is attached to CF(0) by a central stalk formed by the gamma and epsilon chains, while a peripheral stalk is formed by the delta and b chains.

It localises to the cell inner membrane. The catalysed reaction is ATP + H2O + 4 H(+)(in) = ADP + phosphate + 5 H(+)(out). Its function is as follows. Produces ATP from ADP in the presence of a proton gradient across the membrane. The alpha chain is a regulatory subunit. This chain is ATP synthase subunit alpha, found in Bdellovibrio bacteriovorus (strain ATCC 15356 / DSM 50701 / NCIMB 9529 / HD100).